The sequence spans 74 residues: Delta-stichotoxin-Sgt2a (74 aa).

A signal peptide spans 1 to 19; it reads MNRLIILVFAAVFLTLASA. Positions 20–28 are excised as a propeptide; the sequence is EVSEDVNMA. 3 disulfides stabilise this stretch: C34/C71, C36/C64, and C57/C72.

The protein belongs to the sea anemone sodium channel inhibitory toxin family. Type I subfamily.

The protein resides in the secreted. Its subcellular location is the nematocyst. In terms of biological role, binds specifically to voltage-gated sodium channels (Nav), thereby delaying their inactivation during signal transduction. The polypeptide is Delta-stichotoxin-Sgt2a (Stichodactyla gigantea (Giant carpet anemone)).